The chain runs to 297 residues: Phosphoribosylaminoimidazole-succinocarboxamide synthase (297 aa).

Belongs to the SAICAR synthetase family.

It carries out the reaction 5-amino-1-(5-phospho-D-ribosyl)imidazole-4-carboxylate + L-aspartate + ATP = (2S)-2-[5-amino-1-(5-phospho-beta-D-ribosyl)imidazole-4-carboxamido]succinate + ADP + phosphate + 2 H(+). It functions in the pathway purine metabolism; IMP biosynthesis via de novo pathway; 5-amino-1-(5-phospho-D-ribosyl)imidazole-4-carboxamide from 5-amino-1-(5-phospho-D-ribosyl)imidazole-4-carboxylate: step 1/2. This is Phosphoribosylaminoimidazole-succinocarboxamide synthase from Corynebacterium glutamicum (strain R).